Consider the following 262-residue polypeptide: Indole-3-glycerol phosphate synthase (262 aa).

It belongs to the TrpC family.

It carries out the reaction 1-(2-carboxyphenylamino)-1-deoxy-D-ribulose 5-phosphate + H(+) = (1S,2R)-1-C-(indol-3-yl)glycerol 3-phosphate + CO2 + H2O. It participates in amino-acid biosynthesis; L-tryptophan biosynthesis; L-tryptophan from chorismate: step 4/5. The protein is Indole-3-glycerol phosphate synthase of Staphylococcus epidermidis (strain ATCC 12228 / FDA PCI 1200).